Here is a 132-residue protein sequence, read N- to C-terminus: Ribonuclease P protein component (132 aa).

This sequence belongs to the RnpA family. As to quaternary structure, consists of a catalytic RNA component (M1 or rnpB) and a protein subunit.

The catalysed reaction is Endonucleolytic cleavage of RNA, removing 5'-extranucleotides from tRNA precursor.. In terms of biological role, RNaseP catalyzes the removal of the 5'-leader sequence from pre-tRNA to produce the mature 5'-terminus. It can also cleave other RNA substrates such as 4.5S RNA. The protein component plays an auxiliary but essential role in vivo by binding to the 5'-leader sequence and broadening the substrate specificity of the ribozyme. The polypeptide is Ribonuclease P protein component (Micrococcus luteus (strain ATCC 4698 / DSM 20030 / JCM 1464 / CCM 169 / CCUG 5858 / IAM 1056 / NBRC 3333 / NCIMB 9278 / NCTC 2665 / VKM Ac-2230) (Micrococcus lysodeikticus)).